Consider the following 390-residue polypeptide: EF-hand calcium-binding domain-containing protein 4A (390 aa).

Residues 1 to 27 (MSPRSTLRSPLPSRTARSSASSDTPSP) show a composition bias toward low complexity. A disordered region spans residues 1-37 (MSPRSTLRSPLPSRTARSSASSDTPSPGADRQDRMSK). EF-hand domains follow at residues 33-66 (DRMS…QELP) and 67-102 (LSPE…LVGS). Ca(2+) is bound by residues D80, D82, N84, Y86, and E91. The stretch at 173 to 357 (SHLQDALKEK…DDKDAHQAQK (185 aa)) forms a coiled coil. The tract at residues 206–234 (DMESQLKEERERRQALDSMRQGDKKEQLL) is disordered.

The protein belongs to the EFCAB4 family.

The protein is EF-hand calcium-binding domain-containing protein 4A (cracr2b) of Danio rerio (Zebrafish).